Here is a 237-residue protein sequence, read N- to C-terminus: Ribitol-5-phosphate cytidylyltransferase (237 aa).

Residues 7–10 and 80–86 each bind CTP; these read LAGG and GEDRNET.

The protein belongs to the IspD/TarI cytidylyltransferase family. TarI subfamily.

The catalysed reaction is D-ribitol 5-phosphate + CTP + H(+) = CDP-L-ribitol + diphosphate. It participates in cell wall biogenesis; poly(ribitol phosphate) teichoic acid biosynthesis. Catalyzes the transfer of the cytidylyl group of CTP to D-ribitol 5-phosphate. This chain is Ribitol-5-phosphate cytidylyltransferase, found in Listeria monocytogenes serotype 4b (strain F2365).